The sequence spans 181 residues: Protein Syd (181 aa).

The protein belongs to the Syd family.

Its subcellular location is the cell inner membrane. Functionally, interacts with the SecY protein in vivo. May bind preferentially to an uncomplexed state of SecY, thus functioning either as a chelating agent for excess SecY in the cell or as a regulatory factor that negatively controls the translocase function. This Salmonella arizonae (strain ATCC BAA-731 / CDC346-86 / RSK2980) protein is Protein Syd.